Reading from the N-terminus, the 179-residue chain is Ribosome maturation factor RimM (179 aa).

The 84-residue stretch at 96 to 179 (DNEFYWVDLI…KITVDWGLDY (84 aa)) folds into the PRC barrel domain.

Belongs to the RimM family. In terms of assembly, binds ribosomal protein uS19.

The protein resides in the cytoplasm. An accessory protein needed during the final step in the assembly of 30S ribosomal subunit, possibly for assembly of the head region. Essential for efficient processing of 16S rRNA. May be needed both before and after RbfA during the maturation of 16S rRNA. It has affinity for free ribosomal 30S subunits but not for 70S ribosomes. The polypeptide is Ribosome maturation factor RimM (Janthinobacterium sp. (strain Marseille) (Minibacterium massiliensis)).